Here is a 163-residue protein sequence, read N- to C-terminus: Large ribosomal subunit protein uL10 (163 aa).

This sequence belongs to the universal ribosomal protein uL10 family. As to quaternary structure, part of the ribosomal stalk of the 50S ribosomal subunit. The N-terminus interacts with L11 and the large rRNA to form the base of the stalk. The C-terminus forms an elongated spine to which L12 dimers bind in a sequential fashion forming a multimeric L10(L12)X complex.

Forms part of the ribosomal stalk, playing a central role in the interaction of the ribosome with GTP-bound translation factors. This is Large ribosomal subunit protein uL10 from Blochmanniella pennsylvanica (strain BPEN).